The following is a 494-amino-acid chain: Glutamyl-tRNA(Gln) amidotransferase subunit A (494 aa).

Catalysis depends on charge relay system residues K79 and S159. The active-site Acyl-ester intermediate is the S183.

This sequence belongs to the amidase family. GatA subfamily. Heterotrimer of A, B and C subunits.

The enzyme catalyses L-glutamyl-tRNA(Gln) + L-glutamine + ATP + H2O = L-glutaminyl-tRNA(Gln) + L-glutamate + ADP + phosphate + H(+). In terms of biological role, allows the formation of correctly charged Gln-tRNA(Gln) through the transamidation of misacylated Glu-tRNA(Gln) in organisms which lack glutaminyl-tRNA synthetase. The reaction takes place in the presence of glutamine and ATP through an activated gamma-phospho-Glu-tRNA(Gln). In Bartonella bacilliformis (strain ATCC 35685 / KC583 / Herrer 020/F12,63), this protein is Glutamyl-tRNA(Gln) amidotransferase subunit A.